We begin with the raw amino-acid sequence, 245 residues long: Endonuclease III (245 aa).

Positions M119 to G138 constitute a HhH domain. [4Fe-4S] cluster contacts are provided by C198, C205, C208, and C214.

The protein belongs to the Nth/MutY family. [4Fe-4S] cluster is required as a cofactor.

The catalysed reaction is 2'-deoxyribonucleotide-(2'-deoxyribose 5'-phosphate)-2'-deoxyribonucleotide-DNA = a 3'-end 2'-deoxyribonucleotide-(2,3-dehydro-2,3-deoxyribose 5'-phosphate)-DNA + a 5'-end 5'-phospho-2'-deoxyribonucleoside-DNA + H(+). Functionally, DNA repair enzyme that has both DNA N-glycosylase activity and AP-lyase activity. The DNA N-glycosylase activity releases various damaged pyrimidines from DNA by cleaving the N-glycosidic bond, leaving an AP (apurinic/apyrimidinic) site. The AP-lyase activity cleaves the phosphodiester bond 3' to the AP site by a beta-elimination, leaving a 3'-terminal unsaturated sugar and a product with a terminal 5'-phosphate. The chain is Endonuclease III from Mycobacterium leprae (strain TN).